Reading from the N-terminus, the 251-residue chain is NADPH-dependent oxidoreductase (251 aa).

It belongs to the flavin oxidoreductase frp family. It depends on FMN as a cofactor.

Its function is as follows. Reduces FMN, organic nitro compounds and disulfide DTNB. Involved in maintenance of the cellular redox state and the disulfide stress response. The sequence is that of NADPH-dependent oxidoreductase (nfrA) from Staphylococcus aureus (strain Mu50 / ATCC 700699).